A 102-amino-acid polypeptide reads, in one-letter code: Large ribosomal subunit protein bL21 (102 aa).

The span at 79–91 shows a compositional bias: basic residues; the sequence is RKDSKRKKGHRQP. Residues 79–102 are disordered; that stretch reads RKDSKRKKGHRQPYTKLTIDKINA.

The protein belongs to the bacterial ribosomal protein bL21 family. Part of the 50S ribosomal subunit. Contacts protein L20.

Functionally, this protein binds to 23S rRNA in the presence of protein L20. This is Large ribosomal subunit protein bL21 from Staphylococcus epidermidis (strain ATCC 35984 / DSM 28319 / BCRC 17069 / CCUG 31568 / BM 3577 / RP62A).